We begin with the raw amino-acid sequence, 480 residues long: MDFNSLRKKIITKKASVKELVNDIFLKIDSDDPEINSYICTTKDNAIQQAENIDKLIQNEEILPPLAGMPIAIKDNICTKGVHTTCASKMLKGFIAPYESTASDKLWSSGGICLGKTNLDEFAMGSSTETSVFGVTSNPWDISRVPGGSSGGSAASVAAGLCSAAIGSDTGGSIRQPASFCGVVGLKPTYGRVSRWGLVAFASSLDQIGPITNTVSDAAEILYSISGKDPLDSTCLDQPVPNYLINLNKSIKDLKIGIIKECFEHPGLNTEVKDSVLCGVERFKNLGAEIIEVECPRFNDGIATYYVIAPSEASANLARYDGVKYGFRSEEGSNLIDMTSKSRAEGFGDEVQRRILIGTYALSAGYSDAYYKKAQKVRTLIRNDFDKAFKKVDILLTPTCPTTAFLKGDFSNDPLSMYLSDLLTVPANLAGLPAISIPCGFDTKGLPIGLQLIGNVLEEDKILNAAHIFEIDAQVIKNRL.

Active-site charge relay system residues include K74 and S149. S173 (acyl-ester intermediate) is an active-site residue.

Belongs to the amidase family. GatA subfamily. As to quaternary structure, heterotrimer of A, B and C subunits.

The enzyme catalyses L-glutamyl-tRNA(Gln) + L-glutamine + ATP + H2O = L-glutaminyl-tRNA(Gln) + L-glutamate + ADP + phosphate + H(+). In terms of biological role, allows the formation of correctly charged Gln-tRNA(Gln) through the transamidation of misacylated Glu-tRNA(Gln) in organisms which lack glutaminyl-tRNA synthetase. The reaction takes place in the presence of glutamine and ATP through an activated gamma-phospho-Glu-tRNA(Gln). The polypeptide is Glutamyl-tRNA(Gln) amidotransferase subunit A (Prochlorococcus marinus (strain MIT 9312)).